Consider the following 95-residue polypeptide: NELL2-interacting cell ontogeny regulator 1 (95 aa).

The signal sequence occupies residues 1 to 34 (MAPPPACRSPMSPPPPPLLLLLLSLALLGARARA).

It belongs to the NICOL family. In terms of assembly, interacts with NELL2; triggers epididymal differentiation. Interacts with cell surface receptor TFRC; the interaction mediates uptake of NICOL1 into fibroblasts. In terms of tissue distribution, detected in the brain (at protein level). Also expressed at low levels in the kidney, primarily in tubular epithelial cells.

It localises to the secreted. The protein localises to the cytoplasm. Its subcellular location is the perinuclear region. MRNA-binding protein which interacts with a range of target mRNAs including SERPINE1, ACTA2, CCN2 and COL4A1 and may promote extracellular matrix production. Binds to the 3'-UTR of SERPINE1 mRNA and stabilizes the mRNA, possibly by competing for binding with SERBP1 and preventing SERBP1-mediated mRNA degradation. Also binds to the 3'-UTR of ACTA2. Testis-derived lumicrine factor that triggers epididymal differentiation and sperm maturation. This chain is NELL2-interacting cell ontogeny regulator 1, found in Homo sapiens (Human).